The chain runs to 338 residues: Taste receptor type 2 member 39 (338 aa).

At methionine 1–serine 30 the chain is on the extracellular side. The helical transmembrane segment at proline 31–alanine 51 threads the bilayer. Topologically, residues asparagine 52 to arginine 74 are cytoplasmic. The helical transmembrane segment at isoleucine 75–threonine 95 threads the bilayer. The Extracellular portion of the chain corresponds to isoleucine 96–serine 116. The chain crosses the membrane as a helical span at residues phenylalanine 117–valine 137. Over lysine 138–glycine 156 the chain is Cytoplasmic. The helical transmembrane segment at leucine 157–isoleucine 177 threads the bilayer. Topologically, residues asparagine 178–asparagine 205 are extracellular. N-linked (GlcNAc...) asparagine glycosylation is found at asparagine 185 and asparagine 194. A helical membrane pass occupies residues valine 206 to leucine 226. The Cytoplasmic segment spans residues threonine 227 to lysine 262. Residues alanine 263–serine 283 form a helical membrane-spanning segment. At asparagine 284–leucine 291 the chain is on the extracellular side. Residues tryptophan 292–isoleucine 312 traverse the membrane as a helical segment. Topologically, residues glutamine 313 to leucine 338 are cytoplasmic.

The protein belongs to the G-protein coupled receptor T2R family. As to expression, expressed in subsets of taste receptor cells of the tongue and exclusively in gustducin-positive cells.

The protein localises to the membrane. Receptor that may play a role in the perception of bitterness and is gustducin-linked. May play a role in sensing the chemical composition of the gastrointestinal content. The activity of this receptor may stimulate alpha gustducin, mediate PLC-beta-2 activation and lead to the gating of TRPM5. In Homo sapiens (Human), this protein is Taste receptor type 2 member 39 (TAS2R39).